The sequence spans 129 residues: Glycine cleavage system H protein (129 aa).

Positions 24–106 (SYTVGISEHA…YGDGWFFRIM (83 aa)) constitute a Lipoyl-binding domain. Position 65 is an N6-lipoyllysine (K65).

The protein belongs to the GcvH family. The glycine cleavage system is composed of four proteins: P, T, L and H. (R)-lipoate is required as a cofactor.

Its function is as follows. The glycine cleavage system catalyzes the degradation of glycine. The H protein shuttles the methylamine group of glycine from the P protein to the T protein. This chain is Glycine cleavage system H protein, found in Shewanella loihica (strain ATCC BAA-1088 / PV-4).